Here is a 156-residue protein sequence, read N- to C-terminus: Iron sulfur cluster assembly protein 2, mitochondrial (156 aa).

Residues 1-26 (MFARLANPAHFKPLTGSHITRAAKRL) constitute a mitochondrion transit peptide.

It belongs to the NifU family. In terms of assembly, component of the core Fe-S cluster (ISC) assembly machinery. Interacts with frataxin. Interacts with the mitochondrial co-chaperones JAC1 and SSQ1. Interacts with NFS1. Interacts with ferredoxin YAH1; interacts with the reduced form. [2Fe-2S] cluster serves as cofactor.

It is found in the mitochondrion matrix. It participates in cofactor biosynthesis; iron-sulfur cluster biosynthesis. Functionally, scaffold protein for the de novo synthesis of iron-sulfur (Fe-S) clusters within mitochondria, which is required for maturation of both mitochondrial and cytoplasmic [2Fe-2S] and [4Fe-4S] proteins. First, a [2Fe-2S] cluster is transiently assembled on the scaffold proteins ISU1 and ISU2. In a second step, the cluster is released from ISU1/ISU2, transferred to glutaredoxin GRX5, followed by the formation of mitochondrial [2Fe-2S] proteins, the synthesis of [4Fe-4S] clusters and their target-specific insertion into the recipient apoproteins. Cluster assembly on ISU1/ISU2 depends on the function of the cysteine desulfurase complex NFS1-ISD11, which serves as the sulfur donor for cluster synthesis, the iron-binding protein frataxin (YFH1) as the putative iron donor, and the electron transfer chain comprised of ferredoxin reductase ARH1 and ferredoxin YAH1, which receive their electrons from NADH. Fe-S cluster release from ISU1/ISU2 is achieved by interaction with the Hsp70 chaperone SSQ1, assisted by the DnaJ-like co-chaperone JAC1 and the nucleotide exchange factor MGE1. ISU1 is the major isoform in yeast, while ISU2 is not detectable in cells grown to stationary phase. Also involved in production of a sulfur precursor required for thiolation of cytoplasmic tRNAs. This is Iron sulfur cluster assembly protein 2, mitochondrial from Saccharomyces cerevisiae (strain ATCC 204508 / S288c) (Baker's yeast).